We begin with the raw amino-acid sequence, 356 residues long: Protein RecA (356 aa).

78 to 85 (GPESSGKT) provides a ligand contact to ATP.

It belongs to the RecA family.

The protein localises to the cytoplasm. Functionally, can catalyze the hydrolysis of ATP in the presence of single-stranded DNA, the ATP-dependent uptake of single-stranded DNA by duplex DNA, and the ATP-dependent hybridization of homologous single-stranded DNAs. It interacts with LexA causing its activation and leading to its autocatalytic cleavage. The chain is Protein RecA from Paracoccus denitrificans.